The following is a 203-amino-acid chain: ADP-ribosylation factor-like protein 6-interacting protein 1 (203 aa).

Residues 1–41 (MAEGDNRSSNLLAAETASLEEQLQGWGEVMLMADKVLRWER) lie on the Cytoplasmic side of the membrane. A helical membrane pass occupies residues 42–62 (AWFPPAIMGVVSLVFLIIYYL). Residues 63–65 (DPS) are Lumenal-facing. Residues 66-86 (VLSGVSCFVMFLCLADYLVPI) traverse the membrane as a helical segment. Over 87 to 133 (LAPRIFGSNKWTTEQQQRFHEICSNLVKTRRRAVGWWKRLFTLKEEK) the chain is Cytoplasmic. The chain crosses the membrane as a helical span at residues 134–175 (PKMYFMTMIVSLAAVAWVGQQVHNLLLTYLIVTSLLLLPGLN). At 176 to 203 (QHGIISKYIGMAKREINKLLKQKEKKNE) the chain is on the lumenal side.

It belongs to the ARL6ip family. In terms of assembly, homooligomer. Heterodimer with ARL6IP5. Interacts with ATL1, TMEM33 and ARL6.

Its subcellular location is the endomembrane system. The protein resides in the endoplasmic reticulum membrane. It localises to the endoplasmic reticulum. Its function is as follows. Positively regulates SLC1A1/EAAC1-mediated glutamate transport by increasing its affinity for glutamate in a PKC activity-dependent manner. Promotes the catalytic efficiency of SLC1A1/EAAC1 probably by reducing its interaction with ARL6IP5, a negative regulator of SLC1A1/EAAC1-mediated glutamate transport. Plays a role in the formation and stabilization of endoplasmic reticulum tubules. Negatively regulates apoptosis, possibly by modulating the activity of caspase-9 (CASP9). Inhibits cleavage of CASP9-dependent substrates and downstream markers of apoptosis but not CASP9 itself. May be involved in protein transport, membrane trafficking, or cell signaling during hematopoietic maturation. This chain is ADP-ribosylation factor-like protein 6-interacting protein 1 (ARL6IP1), found in Pongo abelii (Sumatran orangutan).